Reading from the N-terminus, the 399-residue chain is Putative 8-amino-7-oxononanoate synthase (399 aa).

Residue Arg24 participates in substrate binding. 111 to 112 (GW) is a pyridoxal 5'-phosphate binding site. Residue His141 coordinates substrate. Pyridoxal 5'-phosphate-binding positions include Ser189, 214–217 (DEAH), and 243–246 (TFSK). Lys246 carries the N6-(pyridoxal phosphate)lysine modification. Thr360 lines the substrate pocket.

The protein belongs to the class-II pyridoxal-phosphate-dependent aminotransferase family. BioF subfamily. As to quaternary structure, homodimer. Pyridoxal 5'-phosphate is required as a cofactor.

The enzyme catalyses 6-carboxyhexanoyl-[ACP] + L-alanine + H(+) = (8S)-8-amino-7-oxononanoate + holo-[ACP] + CO2. It participates in cofactor biosynthesis; biotin biosynthesis. Catalyzes the decarboxylative condensation of pimeloyl-[acyl-carrier protein] and L-alanine to produce 8-amino-7-oxononanoate (AON), [acyl-carrier protein], and carbon dioxide. This is Putative 8-amino-7-oxononanoate synthase (bioF) from Bordetella bronchiseptica (strain ATCC BAA-588 / NCTC 13252 / RB50) (Alcaligenes bronchisepticus).